Reading from the N-terminus, the 317-residue chain is Melanocyte-stimulating hormone receptor (317 aa).

Over 1–37 (MPIHGAPRKLLGSLNSTPTATPKLGLAANHTGAPCLE) the chain is Extracellular. Residue Asn29 is glycosylated (N-linked (GlcNAc...) asparagine). Residues 38–63 (VSIPDGLFLSLGLVSLVENVLVVAAI) traverse the membrane as a helical segment. The Cytoplasmic segment spans residues 64-72 (AKNRNLHSP). The chain crosses the membrane as a helical span at residues 73–93 (MYCFICCLALSDLLVSGSNML). Residues 94 to 118 (EMAVVLLLEGGALATRASVVQQLHN) are Extracellular-facing. Residues 119 to 140 (TIDVLTCSSMLCSLCFLGAIAV) traverse the membrane as a helical segment. The Cytoplasmic portion of the chain corresponds to 141–163 (DRHISIFYALRYHSIMTLPRAQR). A helical membrane pass occupies residues 164 to 183 (VIAAIWVASILSSTLFITYY). Residues 184 to 191 (DHAAVLLC) are Extracellular-facing. A helical membrane pass occupies residues 192–211 (LVVFFLAMLVLMAVLYVHML). The Cytoplasmic portion of the chain corresponds to 212 to 240 (ARACQHAQGITRLHKRQPPAHQGFGLRGA). The helical transmembrane segment at 241–266 (ATLTILLGIFFLCWGPFFLHLKLVVF) threads the bilayer. The Extracellular segment spans residues 267 to 279 (CPQHLTCSCIFKN). The chain crosses the membrane as a helical span at residues 280-300 (FKVFLTLIICNTIIDPLIYAF). The Cytoplasmic segment spans residues 301-317 (RSQELRRTLKEVLLCSW). The S-palmitoyl cysteine moiety is linked to residue Cys315.

This sequence belongs to the G-protein coupled receptor 1 family. In terms of assembly, interacts with MGRN1, but does not undergo MGRN1-mediated ubiquitination; this interaction competes with GNAS-binding and thus inhibits agonist-induced cAMP production. Interacts with OPN3; the interaction results in a decrease in MC1R-mediated cAMP signaling and ultimately a decrease in melanin production in melanocytes.

It is found in the cell membrane. Functionally, receptor for MSH (alpha, beta and gamma) and ACTH. The activity of this receptor is mediated by G proteins which activate adenylate cyclase. Mediates melanogenesis, the production of eumelanin (black/brown) and phaeomelanin (red/yellow), via regulation of cAMP signaling in melanocytes. The polypeptide is Melanocyte-stimulating hormone receptor (MC1R) (Saimiri oerstedii (Central American squirrel monkey)).